Here is a 178-residue protein sequence, read N- to C-terminus: ATP synthase subunit delta (178 aa).

This sequence belongs to the ATPase delta chain family. As to quaternary structure, F-type ATPases have 2 components, F(1) - the catalytic core - and F(0) - the membrane proton channel. F(1) has five subunits: alpha(3), beta(3), gamma(1), delta(1), epsilon(1). F(0) has three main subunits: a(1), b(2) and c(10-14). The alpha and beta chains form an alternating ring which encloses part of the gamma chain. F(1) is attached to F(0) by a central stalk formed by the gamma and epsilon chains, while a peripheral stalk is formed by the delta and b chains.

Its subcellular location is the cell inner membrane. Functionally, f(1)F(0) ATP synthase produces ATP from ADP in the presence of a proton or sodium gradient. F-type ATPases consist of two structural domains, F(1) containing the extramembraneous catalytic core and F(0) containing the membrane proton channel, linked together by a central stalk and a peripheral stalk. During catalysis, ATP synthesis in the catalytic domain of F(1) is coupled via a rotary mechanism of the central stalk subunits to proton translocation. Its function is as follows. This protein is part of the stalk that links CF(0) to CF(1). It either transmits conformational changes from CF(0) to CF(1) or is implicated in proton conduction. This Nitrosomonas eutropha (strain DSM 101675 / C91 / Nm57) protein is ATP synthase subunit delta.